A 298-amino-acid chain; its full sequence is Acidic endochitinase (298 aa).

The signal sequence occupies residues 1–29 (MKPNMACLKQVSALLLPLLFISFFKPSHA). The GH18 domain maps to 30 to 298 (GGISVYWGQN…GYSGAIIGSV (269 aa)). 2 disulfides stabilise this stretch: cysteine 49/cysteine 96 and cysteine 79/cysteine 86. The active-site Proton donor is glutamate 156. Cysteines 185 and 214 form a disulfide.

Belongs to the glycosyl hydrolase 18 family. Chitinase class II subfamily.

Its subcellular location is the secreted. It is found in the extracellular space. The enzyme catalyses Random endo-hydrolysis of N-acetyl-beta-D-glucosaminide (1-&gt;4)-beta-linkages in chitin and chitodextrins.. In terms of biological role, this protein functions as a defense against chitin containing fungal pathogens. This Phaseolus angularis (Azuki bean) protein is Acidic endochitinase.